The primary structure comprises 312 residues: Serine/threonine-protein phosphatase PP1 isozyme 5 (312 aa).

Ala2 is modified (N-acetylalanine). Mn(2+)-binding residues include Asp70, His72, Asp98, and Asn130. His131 functions as the Proton donor in the catalytic mechanism. Mn(2+)-binding residues include His179 and His254.

The protein belongs to the PPP phosphatase family. PP-1 subfamily. The cofactor is Mn(2+).

It localises to the nucleus. The protein resides in the cytoplasm. It carries out the reaction O-phospho-L-seryl-[protein] + H2O = L-seryl-[protein] + phosphate. It catalyses the reaction O-phospho-L-threonyl-[protein] + H2O = L-threonyl-[protein] + phosphate. With respect to regulation, phosphatase activity is strongly reduced by the protein phosphatase inhibitor 2 (I-2). Serine/threonine-protein phosphatase that possesses phosphatase activity toward para-nitrophenyl phosphate (pNPP) in vitro. This chain is Serine/threonine-protein phosphatase PP1 isozyme 5, found in Arabidopsis thaliana (Mouse-ear cress).